Consider the following 156-residue polypeptide: Small ribosomal subunit protein uS7 (156 aa).

It belongs to the universal ribosomal protein uS7 family. In terms of assembly, part of the 30S ribosomal subunit. Contacts proteins S9 and S11.

One of the primary rRNA binding proteins, it binds directly to 16S rRNA where it nucleates assembly of the head domain of the 30S subunit. Is located at the subunit interface close to the decoding center, probably blocks exit of the E-site tRNA. In Sodalis glossinidius (strain morsitans), this protein is Small ribosomal subunit protein uS7.